Reading from the N-terminus, the 300-residue chain is Pleckstrin homology domain-containing family A member 3 (300 aa).

In terms of domain architecture, PH spans 1–93; it reads MEGVLYKWTN…WLVALGSSKA (93 aa). The segment at 1–100 is interaction with SACM1L; sequence MEGVLYKWTN…SKACLTDTRT (100 aa). Residues 97–300 are interaction with VAPA and VAPB; it reads DTRTKKEKEI…SEDTLPSFSS (204 aa). The interval 197 to 300 is disordered; it reads PVSPSPVQMM…SEDTLPSFSS (104 aa). Serine 236 and serine 244 each carry phosphoserine. Residues 279–290 show a composition bias toward basic and acidic residues; it reads EESRLMAKKQSE.

As to quaternary structure, interacts with GTP-bound ARF1. Interacts with SACM1L and VAPA and/or VAPB to form a ternary complex. Widely expressed.

It localises to the golgi apparatus. The protein resides in the trans-Golgi network membrane. In terms of biological role, plays a role in regulation of vesicular cargo transport from the trans-Golgi network (TGN) to the plasma membrane. Regulates Golgi phosphatidylinositol 4-phosphate (PtdIns(4)P) levels and activates the PtdIns(4)P phosphatase activity of SACM1L when it binds PtdIns(4)P in 'trans' configuration. Binds preferentially to PtdIns(4)P. Negatively regulates APOB secretion from hepatocytes. This chain is Pleckstrin homology domain-containing family A member 3 (PLEKHA3), found in Homo sapiens (Human).